We begin with the raw amino-acid sequence, 75 residues long: Large ribosomal subunit protein bL31 (75 aa).

Belongs to the bacterial ribosomal protein bL31 family. Type A subfamily. As to quaternary structure, part of the 50S ribosomal subunit.

Its function is as follows. Binds the 23S rRNA. This is Large ribosomal subunit protein bL31 from Acidiphilium cryptum (strain JF-5).